A 159-amino-acid polypeptide reads, in one-letter code: Cyclic pyranopterin monophosphate synthase (159 aa).

Substrate contacts are provided by residues 76–78 (LCH) and 114–115 (ME). Residue Asp-129 is part of the active site.

Belongs to the MoaC family. In terms of assembly, homohexamer; trimer of dimers.

The catalysed reaction is (8S)-3',8-cyclo-7,8-dihydroguanosine 5'-triphosphate = cyclic pyranopterin phosphate + diphosphate. The protein operates within cofactor biosynthesis; molybdopterin biosynthesis. In terms of biological role, catalyzes the conversion of (8S)-3',8-cyclo-7,8-dihydroguanosine 5'-triphosphate to cyclic pyranopterin monophosphate (cPMP). This Shewanella oneidensis (strain ATCC 700550 / JCM 31522 / CIP 106686 / LMG 19005 / NCIMB 14063 / MR-1) protein is Cyclic pyranopterin monophosphate synthase.